Reading from the N-terminus, the 139-residue chain is Small ribosomal subunit protein bS6 (139 aa).

The segment covering 95–121 has biased composition (basic and acidic residues); it reads AVTEQSEMLKAEESRNERRERRERPND. The interval 95–139 is disordered; sequence AVTEQSEMLKAEESRNERRERRERPNDNAEGADGDDNSDSDNADE. The segment covering 124–139 has biased composition (acidic residues); the sequence is EGADGDDNSDSDNADE.

It belongs to the bacterial ribosomal protein bS6 family.

Functionally, binds together with bS18 to 16S ribosomal RNA. This chain is Small ribosomal subunit protein bS6, found in Pseudomonas aeruginosa (strain LESB58).